Here is a 291-residue protein sequence, read N- to C-terminus: N-acetylmannosamine kinase (291 aa).

ATP-binding positions include 5-12 (AIDIGGTK) and 132-139 (GVGGGVVS). Zn(2+) contacts are provided by His156, Cys166, Cys168, and Cys173.

This sequence belongs to the ROK (NagC/XylR) family. NanK subfamily. In terms of assembly, homodimer.

It carries out the reaction an N-acyl-D-mannosamine + ATP = an N-acyl-D-mannosamine 6-phosphate + ADP + H(+). It participates in amino-sugar metabolism; N-acetylneuraminate degradation; D-fructose 6-phosphate from N-acetylneuraminate: step 2/5. Its function is as follows. Catalyzes the phosphorylation of N-acetylmannosamine (ManNAc) to ManNAc-6-P. This Escherichia fergusonii (strain ATCC 35469 / DSM 13698 / CCUG 18766 / IAM 14443 / JCM 21226 / LMG 7866 / NBRC 102419 / NCTC 12128 / CDC 0568-73) protein is N-acetylmannosamine kinase.